A 1420-amino-acid polypeptide reads, in one-letter code: DNA-directed RNA polymerase subunit beta' (1420 aa).

The Zn(2+) site is built by cysteine 71, cysteine 73, cysteine 86, and cysteine 89. 3 residues coordinate Mg(2+): aspartate 461, aspartate 463, and aspartate 465. Zn(2+) is bound by residues cysteine 815, cysteine 889, cysteine 896, and cysteine 899.

The protein belongs to the RNA polymerase beta' chain family. As to quaternary structure, the RNAP catalytic core consists of 2 alpha, 1 beta, 1 beta' and 1 omega subunit. When a sigma factor is associated with the core the holoenzyme is formed, which can initiate transcription. It depends on Mg(2+) as a cofactor. Requires Zn(2+) as cofactor.

The catalysed reaction is RNA(n) + a ribonucleoside 5'-triphosphate = RNA(n+1) + diphosphate. Its function is as follows. DNA-dependent RNA polymerase catalyzes the transcription of DNA into RNA using the four ribonucleoside triphosphates as substrates. The chain is DNA-directed RNA polymerase subunit beta' from Histophilus somni (strain 2336) (Haemophilus somnus).